The chain runs to 124 residues: Large ribosomal subunit protein uL22 (124 aa).

The protein belongs to the universal ribosomal protein uL22 family. In terms of assembly, part of the 50S ribosomal subunit.

In terms of biological role, this protein binds specifically to 23S rRNA; its binding is stimulated by other ribosomal proteins, e.g. L4, L17, and L20. It is important during the early stages of 50S assembly. It makes multiple contacts with different domains of the 23S rRNA in the assembled 50S subunit and ribosome. The globular domain of the protein is located near the polypeptide exit tunnel on the outside of the subunit, while an extended beta-hairpin is found that lines the wall of the exit tunnel in the center of the 70S ribosome. The protein is Large ribosomal subunit protein uL22 of Treponema pallidum (strain Nichols).